We begin with the raw amino-acid sequence, 56 residues long: TauPI-stichotoxin-Hcr2d (56 aa).

Residues 4 to 54 form the BPTI/Kunitz inhibitor domain; the sequence is CLEPKVVGPCTAYFPRFYFNSETGKCTPFIYGGCEGNGNNFETLRACRGIC. Disulfide bonds link cysteine 4–cysteine 54, cysteine 13–cysteine 37, and cysteine 29–cysteine 50.

Belongs to the venom Kunitz-type family. Sea anemone type 2 potassium channel toxin subfamily.

The protein resides in the secreted. The protein localises to the nematocyst. Functionally, this protease inhibitor shows two different activities, it inhibits both the capsaicin receptor TRPV1 and serine proteases. It partially blocks the capsaicin- and acid-induced response of TRPV1, a receptor of the pain pathway. It also weakly inhibits trypsin and chymotrypsin activity (Ki=0.5 uM and Ki=7 uM, respectively). In addition, it may also alter tachykinin levels by suppressing endogenous proteases. In vivo, it shows antinociceptive and analgesic activities. It significantly prolongs paw withdrawal latency and blocks heat-induced and chemical-induced acute pain. In addition, it also shows anti-inflammatory and analgesic effects in models of osteoarthritis and rheumatoid arthritis. In vivo, unlike other TRPV1 antagonists whose activity is associated with hyperthermia, this protein has the remarkable feature of dropping core body temperature. This chain is TauPI-stichotoxin-Hcr2d, found in Radianthus crispa (Leathery sea anemone).